A 477-amino-acid chain; its full sequence is Glycogen synthase (477 aa).

Lysine 15 lines the ADP-alpha-D-glucose pocket.

The protein belongs to the glycosyltransferase 1 family. Bacterial/plant glycogen synthase subfamily.

It carries out the reaction [(1-&gt;4)-alpha-D-glucosyl](n) + ADP-alpha-D-glucose = [(1-&gt;4)-alpha-D-glucosyl](n+1) + ADP + H(+). Its pathway is glycan biosynthesis; glycogen biosynthesis. Its function is as follows. Synthesizes alpha-1,4-glucan chains using ADP-glucose. The protein is Glycogen synthase of Erwinia tasmaniensis (strain DSM 17950 / CFBP 7177 / CIP 109463 / NCPPB 4357 / Et1/99).